The following is a 420-amino-acid chain: Serine hydroxymethyltransferase (420 aa).

(6S)-5,6,7,8-tetrahydrofolate-binding positions include L117 and 121–123 (GHL). K226 carries the post-translational modification N6-(pyridoxal phosphate)lysine.

The protein belongs to the SHMT family. As to quaternary structure, homodimer. The cofactor is pyridoxal 5'-phosphate.

It localises to the cytoplasm. The catalysed reaction is (6R)-5,10-methylene-5,6,7,8-tetrahydrofolate + glycine + H2O = (6S)-5,6,7,8-tetrahydrofolate + L-serine. It functions in the pathway one-carbon metabolism; tetrahydrofolate interconversion. The protein operates within amino-acid biosynthesis; glycine biosynthesis; glycine from L-serine: step 1/1. Catalyzes the reversible interconversion of serine and glycine with tetrahydrofolate (THF) serving as the one-carbon carrier. This reaction serves as the major source of one-carbon groups required for the biosynthesis of purines, thymidylate, methionine, and other important biomolecules. Also exhibits THF-independent aldolase activity toward beta-hydroxyamino acids, producing glycine and aldehydes, via a retro-aldol mechanism. The polypeptide is Serine hydroxymethyltransferase (Rhodopirellula baltica (strain DSM 10527 / NCIMB 13988 / SH1)).